The following is a 272-amino-acid chain: Putative esterase/lipase 3 (272 aa).

Residue H34 is part of the active site. S100 acts as the Charge relay system in catalysis.

The protein belongs to the lipase/esterase LIP3/BchO family.

In Mycoplasma pneumoniae (strain ATCC 29342 / M129 / Subtype 1) (Mycoplasmoides pneumoniae), this protein is Putative esterase/lipase 3.